The sequence spans 973 residues: 109 kDa U5 small nuclear ribonucleoprotein component GFL (973 aa).

Positions 1-40 (MDGSLYGECGNYIGPEIESDRDSDDSVEDEDLQEPGGSNG) are disordered. A compositionally biased stretch (acidic residues) spans 17-33 (IESDRDSDDSVEDEDLQ). In terms of domain architecture, tr-type G spans 122–408 (ALVRNVALVG…LGVTLSNSAY (287 aa)). A G1 region spans residues 131–138 (GHLQHGKT). 131–138 (GHLQHGKT) contacts GTP. The interval 175 to 179 (NISIK) is G2. Positions 201-204 (DTPG) are G3. GTP contacts are provided by residues 201 to 205 (DTPGN) and 255 to 258 (NKVD). The interval 255–258 (NKVD) is G4. Residues 381-383 (YSQ) form a G5 region.

The protein belongs to the TRAFAC class translation factor GTPase superfamily. Classic translation factor GTPase family. Expressed in flower buds, open flowers and siliques. Expressed at low levels in rosettes leaves, cauline leaves and stems.

The protein localises to the nucleus speckle. Splicing factor involved in pre-mRNA splicing and component of the spliceosome. The sequence is that of 109 kDa U5 small nuclear ribonucleoprotein component GFL from Arabidopsis thaliana (Mouse-ear cress).